The following is a 466-amino-acid chain: Ribulose bisphosphate carboxylase large chain (466 aa).

N6,N6,N6-trimethyllysine is present on Lys-5. The substrate site is built by Asn-114 and Thr-164. Lys-166 functions as the Proton acceptor in the catalytic mechanism. Lys-168 contributes to the substrate binding site. The Mg(2+) site is built by Lys-192, Asp-194, and Glu-195. The residue at position 192 (Lys-192) is an N6-carboxylysine. The Proton acceptor role is filled by His-285. Substrate-binding residues include Arg-286, His-318, and Ser-370.

Belongs to the RuBisCO large chain family. Type I subfamily. Heterohexadecamer of 8 large chains and 8 small chains; disulfide-linked. The disulfide link is formed within the large subunit homodimers. The cofactor is Mg(2+). The disulfide bond which can form in the large chain dimeric partners within the hexadecamer appears to be associated with oxidative stress and protein turnover.

Its subcellular location is the plastid. It localises to the chloroplast. The enzyme catalyses 2 (2R)-3-phosphoglycerate + 2 H(+) = D-ribulose 1,5-bisphosphate + CO2 + H2O. It catalyses the reaction D-ribulose 1,5-bisphosphate + O2 = 2-phosphoglycolate + (2R)-3-phosphoglycerate + 2 H(+). In terms of biological role, ruBisCO catalyzes two reactions: the carboxylation of D-ribulose 1,5-bisphosphate, the primary event in carbon dioxide fixation, as well as the oxidative fragmentation of the pentose substrate in the photorespiration process. Both reactions occur simultaneously and in competition at the same active site. This chain is Ribulose bisphosphate carboxylase large chain, found in Adenium obesum (Desert rose).